Reading from the N-terminus, the 491-residue chain is NADH-quinone oxidoreductase subunit N (491 aa).

14 helical membrane passes run 6 to 26, 37 to 57, 69 to 89, 103 to 123, 128 to 148, 163 to 183, 206 to 226, 238 to 258, 273 to 293, 301 to 321, 335 to 355, 379 to 399, 413 to 433, and 458 to 478; these read TLAP…INWI, VAYP…GMNA, LVVI…GLFV, MFAG…IVMI, FLTL…LVAL, FVLG…MYGA, LAFG…AAPF, PTAV…ALFI, QMML…TAIV, LAYS…SGVV, AMFY…IILL, FAFL…TVGF, GMTW…FYYL, and SMLS…AALM.

This sequence belongs to the complex I subunit 2 family. In terms of assembly, NDH-1 is composed of 14 different subunits. Subunits NuoA, H, J, K, L, M, N constitute the membrane sector of the complex.

Its subcellular location is the cell inner membrane. The enzyme catalyses a quinone + NADH + 5 H(+)(in) = a quinol + NAD(+) + 4 H(+)(out). NDH-1 shuttles electrons from NADH, via FMN and iron-sulfur (Fe-S) centers, to quinones in the respiratory chain. The immediate electron acceptor for the enzyme in this species is believed to be ubiquinone. Couples the redox reaction to proton translocation (for every two electrons transferred, four hydrogen ions are translocated across the cytoplasmic membrane), and thus conserves the redox energy in a proton gradient. The chain is NADH-quinone oxidoreductase subunit N from Cupriavidus taiwanensis (strain DSM 17343 / BCRC 17206 / CCUG 44338 / CIP 107171 / LMG 19424 / R1) (Ralstonia taiwanensis (strain LMG 19424)).